Consider the following 259-residue polypeptide: Pimeloyl-[acyl-carrier protein] methyl ester esterase (259 aa).

The region spanning 16–244 (LVFIHGWGLN…ASHAPFLSHP (229 aa)) is the AB hydrolase-1 domain. Substrate contacts are provided by residues tryptophan 22, 82-83 (SL), and 143-147 (FFNIQ). Serine 82 acts as the Nucleophile in catalysis. Residues aspartate 207 and histidine 237 contribute to the active site. Position 237 (histidine 237) interacts with substrate.

It belongs to the AB hydrolase superfamily. Carboxylesterase BioH family. As to quaternary structure, monomer.

The protein localises to the cytoplasm. It catalyses the reaction 6-carboxyhexanoyl-[ACP] methyl ester + H2O = 6-carboxyhexanoyl-[ACP] + methanol + H(+). The protein operates within cofactor biosynthesis; biotin biosynthesis. Its function is as follows. The physiological role of BioH is to remove the methyl group introduced by BioC when the pimeloyl moiety is complete. It allows to synthesize pimeloyl-ACP via the fatty acid synthetic pathway through the hydrolysis of the ester bonds of pimeloyl-ACP esters. In Wigglesworthia glossinidia brevipalpis, this protein is Pimeloyl-[acyl-carrier protein] methyl ester esterase.